We begin with the raw amino-acid sequence, 348 residues long: D-alanine--D-alanine ligase (348 aa).

One can recognise an ATP-grasp domain in the interval Lys-132–Ala-334. Residue Glu-162–Glu-217 coordinates ATP. The Mg(2+) site is built by Asp-288, Glu-301, and Asn-303.

The protein belongs to the D-alanine--D-alanine ligase family. It depends on Mg(2+) as a cofactor. Mn(2+) serves as cofactor.

Its subcellular location is the cytoplasm. The enzyme catalyses 2 D-alanine + ATP = D-alanyl-D-alanine + ADP + phosphate + H(+). The protein operates within cell wall biogenesis; peptidoglycan biosynthesis. Cell wall formation. This chain is D-alanine--D-alanine ligase, found in Streptococcus gordonii (strain Challis / ATCC 35105 / BCRC 15272 / CH1 / DL1 / V288).